Here is a 255-residue protein sequence, read N- to C-terminus: MKRLNTLVLYISFLILIISIVAGCGTGKEAEIKKSFEKTLSMYPIKNLEDLYDKEGYRDDEFDKNDKGTWTISSEMAIQKKGEALNIKGMVLKLNRNTRSAKGFYYVNAIKKDENGRPQDKQIEYPVKMIDNKIIPTKDIKDEKIKKEIENFKFFAQYGNFKDLTKYKGGDISYNPEAPIYSAKYQLTNDDYNVKQLRKRYDIPTNKAPKLLLKGSGNLDGSSIGYKKIEFTFVEKKGENTYFTANLHFKPSNDE.

A signal peptide spans 1–23 (MKRLNTLVLYISFLILIISIVAG). A lipid anchor (N-palmitoyl cysteine) is attached at C24. The S-diacylglycerol cysteine moiety is linked to residue C24.

The protein belongs to the staphylococcal tandem lipoprotein family.

The protein resides in the cell membrane. This is an uncharacterized protein from Staphylococcus aureus (strain N315).